The following is a 118-amino-acid chain: Mitochondrial protein YPR099C (118 aa).

It is found in the mitochondrion. Its function is as follows. Essential for the functional mitochondria and respiratory growth. The polypeptide is Mitochondrial protein YPR099C (Saccharomyces cerevisiae (strain ATCC 204508 / S288c) (Baker's yeast)).